Reading from the N-terminus, the 223-residue chain is Transcription factor bHLH75 (223 aa).

Positions 58–100 are disordered; sequence FPNLLHGNTRRKGNKEESGSKRRRKRSEEEEAMNGDETQKPKD. The bHLH domain maps to 110-160; it reads QATDSHSLAERVRREKINERLKCLQDLVPGCYKAMGMAVMLDVIIDYVRSL.

Homodimer. In terms of tissue distribution, expressed in leaves, stems, and flowers.

The protein resides in the nucleus. This chain is Transcription factor bHLH75 (BHLH75), found in Arabidopsis thaliana (Mouse-ear cress).